We begin with the raw amino-acid sequence, 379 residues long: Dual-specificity RNA methyltransferase RlmN (379 aa).

Catalysis depends on E90, which acts as the Proton acceptor. In terms of domain architecture, Radical SAM core spans 96-348; it reads EPNRGTLCVS…TTVRKTRGDD (253 aa). C103 and C353 are oxidised to a cystine. [4Fe-4S] cluster is bound by residues C110, C114, and C117. Residues 179–180, S211, 233–235, and N310 each bind S-adenosyl-L-methionine; these read GE and SLH. Residue C353 is the S-methylcysteine intermediate of the active site.

Belongs to the radical SAM superfamily. RlmN family. Requires [4Fe-4S] cluster as cofactor.

It localises to the cytoplasm. It carries out the reaction adenosine(2503) in 23S rRNA + 2 reduced [2Fe-2S]-[ferredoxin] + 2 S-adenosyl-L-methionine = 2-methyladenosine(2503) in 23S rRNA + 5'-deoxyadenosine + L-methionine + 2 oxidized [2Fe-2S]-[ferredoxin] + S-adenosyl-L-homocysteine. The enzyme catalyses adenosine(37) in tRNA + 2 reduced [2Fe-2S]-[ferredoxin] + 2 S-adenosyl-L-methionine = 2-methyladenosine(37) in tRNA + 5'-deoxyadenosine + L-methionine + 2 oxidized [2Fe-2S]-[ferredoxin] + S-adenosyl-L-homocysteine. Specifically methylates position 2 of adenine 2503 in 23S rRNA and position 2 of adenine 37 in tRNAs. m2A2503 modification seems to play a crucial role in the proofreading step occurring at the peptidyl transferase center and thus would serve to optimize ribosomal fidelity. This Nitrosomonas eutropha (strain DSM 101675 / C91 / Nm57) protein is Dual-specificity RNA methyltransferase RlmN.